Here is a 317-residue protein sequence, read N- to C-terminus: MKALWVALVVTLLAGCRAEVEPEPEPEVQLGQEQPEWQGSQPWELALGRLWDYLRWVQTLSDQVQEELLSTQVTQELTALMEETMKEVKAYKAELEEQLSPVAQETRARLSKELQAAQARLGTDMEDLRSRLAHYRNEVQAMLGQTTDELRNRLASHLRKLRKRLLRDAEDLQKRLAVYRAGAVEGAERSVSALRERLGPLVEQGRLGTATTSTLGSQPLRERAEAWGQKLRGRLEAVGARAQDRLDKMREQLEEVRAKVEEQASQMRLQAETFQARLKGWFQPLVEDLQRQWAGLVEKVQQLAVGTTPTPAASKNQ.

Residues 1–18 form the signal peptide; sequence MKALWVALVVTLLAGCRA. 8 repeat units span residues 79-100, 101-122, 123-144, 145-166, 167-188, 189-210, 211-232, and 233-254. The tract at residues 79-254 is 8 X 22 AA approximate tandem repeats; sequence ALMEETMKEV…RLDKMREQLE (176 aa). Met142 carries the methionine sulfoxide modification. Positions 157–167 are LDL and other lipoprotein receptors binding; that stretch reads HLRKLRKRLLR. 161 to 164 provides a ligand contact to heparin; sequence LRKR. The tract at residues 209 to 289 is lipid-binding and lipoprotein association; it reads TATTSTLGSQ…GWFQPLVEDL (81 aa). An O-linked (GalNAc...) threonine glycan is attached at Thr211. Heparin is bound at residue 228-235; it reads GQKLRGRL. The tract at residues 265–317 is homooligomerization; that stretch reads SQMRLQAETFQARLKGWFQPLVEDLQRQWAGLVEKVQQLAVGTTPTPAASKNQ. Positions 277–289 are specificity for association with VLDL; that stretch reads RLKGWFQPLVEDL. O-linked (GalNAc...) threonine glycosylation is present at Thr310.

Belongs to the apolipoprotein A1/A4/E family. Homotetramer. May interact with ABCA1; functionally associated with ABCA1 in the biogenesis of HDLs. May interact with APP/A4 amyloid-beta peptide; the interaction is extremely stable in vitro but its physiological significance is unclear. May interact with MAPT. May interact with MAP2. In the cerebrospinal fluid, interacts with secreted SORL1. Interacts with PMEL; this allows the loading of PMEL luminal fragment on ILVs to induce fibril nucleation. In terms of processing, APOE exists as multiple glycosylated and sialylated glycoforms within cells and in plasma. The extent of glycosylation and sialylation are tissue and context specific. Glycated in plasma VLDL. Post-translationally, phosphorylated by FAM20C in the extracellular medium.

The protein resides in the secreted. It is found in the extracellular space. Its subcellular location is the extracellular matrix. The protein localises to the extracellular vesicle. It localises to the endosome. The protein resides in the multivesicular body. Its function is as follows. APOE is an apolipoprotein, a protein associating with lipid particles, that mainly functions in lipoprotein-mediated lipid transport between organs via the plasma and interstitial fluids. APOE is a core component of plasma lipoproteins and is involved in their production, conversion and clearance. Apolipoproteins are amphipathic molecules that interact both with lipids of the lipoprotein particle core and the aqueous environment of the plasma. As such, APOE associates with chylomicrons, chylomicron remnants, very low density lipoproteins (VLDL) and intermediate density lipoproteins (IDL) but shows a preferential binding to high-density lipoproteins (HDL). It also binds a wide range of cellular receptors including the LDL receptor/LDLR and the very low-density lipoprotein receptor/VLDLR that mediate the cellular uptake of the APOE-containing lipoprotein particles. Finally, APOE also has a heparin-binding activity and binds heparan-sulfate proteoglycans on the surface of cells, a property that supports the capture and the receptor-mediated uptake of APOE-containing lipoproteins by cells. In Camelus dromedarius (Dromedary), this protein is Apolipoprotein E (APOE).